Consider the following 226-residue polypeptide: uncharacterized protein (226 aa).

Positions 4-226 (LQFQQVGYWY…FTVKENVAVV (223 aa)) constitute an ABC transporter domain. 38–45 (GTSGTGKT) lines the ATP pocket.

It belongs to the ABC transporter superfamily.

This is an uncharacterized protein from Bacillus subtilis (strain 168).